The following is a 74-amino-acid chain: Large ribosomal subunit protein bL31 (74 aa).

Zn(2+) contacts are provided by cysteine 16, cysteine 18, cysteine 38, and cysteine 41.

Belongs to the bacterial ribosomal protein bL31 family. Type A subfamily. As to quaternary structure, part of the 50S ribosomal subunit. Requires Zn(2+) as cofactor.

Functionally, binds the 23S rRNA. The protein is Large ribosomal subunit protein bL31 of Streptomyces griseus subsp. griseus (strain JCM 4626 / CBS 651.72 / NBRC 13350 / KCC S-0626 / ISP 5235).